The chain runs to 953 residues: Zinc finger protein 507 (953 aa).

Position 95 is a phosphoserine (Ser-95). C2H2-type zinc fingers lie at residues 125 to 147, 155 to 185, and 248 to 270; these read YQCS…IKQH, LMCS…ANIH, and YRCL…AWKH. Ser-427 carries the phosphoserine modification. The interval 470 to 489 is disordered; the sequence is KGLATDENAPPGRRRTNSES. C2H2-type zinc fingers lie at residues 641-663, 669-691, 697-720, 758-780, and 786-808; these read YRCR…LRVH, YQCP…MIHH, YQCK…REQH, YRCD…RRIH, and YRCS…MWKH. A disordered region spans residues 831–891; the sequence is GRVLGKTPGK…KLSPTSNTSY (61 aa). A compositionally biased stretch (polar residues) spans 854 to 891; the sequence is TGSSENAVSSSELMSQTPSEVLGTNENEKLSPTSNTSY. The C2H2-type 9 zinc-finger motif lies at 911-933; the sequence is FCCCICGFESTSKENLLDHMKEH.

The protein belongs to the krueppel C2H2-type zinc-finger protein family.

The protein localises to the nucleus. Functionally, may be involved in transcriptional regulation. This chain is Zinc finger protein 507 (ZNF507), found in Pongo abelii (Sumatran orangutan).